A 122-amino-acid polypeptide reads, in one-letter code: Large ribosomal subunit protein bL12 (122 aa).

Belongs to the bacterial ribosomal protein bL12 family. As to quaternary structure, homodimer. Part of the ribosomal stalk of the 50S ribosomal subunit. Forms a multimeric L10(L12)X complex, where L10 forms an elongated spine to which 2 to 4 L12 dimers bind in a sequential fashion. Binds GTP-bound translation factors.

Forms part of the ribosomal stalk which helps the ribosome interact with GTP-bound translation factors. Is thus essential for accurate translation. In Clostridium botulinum (strain Langeland / NCTC 10281 / Type F), this protein is Large ribosomal subunit protein bL12.